The chain runs to 223 residues: MFLRRVHPVRLGHAIQRSLTTTKSRNESTTTTVEAPQAVPSPPPDAFTEEFLRNQIKVTELQRVILGVGSSLAALVNPRRHDMIACLGETTGVPALDAIRRQMLASDEGRQILADRPRINTRTVDMAALKALPETSFGHQYVHFLEKHDITPDSRAEVRFMDDPELAYVMTRYREVHDLVHTVLGMPTNMLGEVAVKWVEALNTGLPMCYGGAVFGAFRLRPK.

The N-terminal 26 residues, 1–26, are a transit peptide targeting the mitochondrion; it reads MFLRRVHPVRLGHAIQRSLTTTKSRN. Low complexity predominate over residues 21–32; it reads TTKSRNESTTTT. Residues 21-43 are disordered; that stretch reads TTKSRNESTTTTVEAPQAVPSPP. Residues H177, D178, H181, and E193 each coordinate Zn(2+).

This sequence belongs to the COQ4 family. As to quaternary structure, component of a multi-subunit COQ enzyme complex. Zn(2+) serves as cofactor.

It is found in the mitochondrion inner membrane. It carries out the reaction a 4-hydroxy-3-methoxy-5-(all-trans-polyprenyl)benzoate + H(+) = a 2-methoxy-6-(all-trans-polyprenyl)phenol + CO2. The protein operates within cofactor biosynthesis; ubiquinone biosynthesis. Lyase that catalyzes the C1-decarboxylation of 4-hydroxy-3-methoxy-5-(all-trans-polyprenyl)benzoic acid into 2-methoxy-6-(all-trans-polyprenyl)phenol during ubiquinone biosynthesis. The sequence is that of Ubiquinone biosynthesis protein COQ4 homolog 2, mitochondrial from Culex quinquefasciatus (Southern house mosquito).